Here is a 427-residue protein sequence, read N- to C-terminus: Enolase (427 aa).

Gln-163 is a binding site for (2R)-2-phosphoglycerate. Catalysis depends on Glu-205, which acts as the Proton donor. Residues Asp-242, Glu-285, and Asp-312 each coordinate Mg(2+). Residues Lys-337, Arg-366, Ser-367, and Lys-388 each coordinate (2R)-2-phosphoglycerate. Residue Lys-337 is the Proton acceptor of the active site.

This sequence belongs to the enolase family. It depends on Mg(2+) as a cofactor.

It localises to the cytoplasm. It is found in the secreted. The protein resides in the cell surface. It catalyses the reaction (2R)-2-phosphoglycerate = phosphoenolpyruvate + H2O. It participates in carbohydrate degradation; glycolysis; pyruvate from D-glyceraldehyde 3-phosphate: step 4/5. Its function is as follows. Catalyzes the reversible conversion of 2-phosphoglycerate (2-PG) into phosphoenolpyruvate (PEP). It is essential for the degradation of carbohydrates via glycolysis. This Janthinobacterium sp. (strain Marseille) (Minibacterium massiliensis) protein is Enolase.